We begin with the raw amino-acid sequence, 253 residues long: Isoprenyl transferase (253 aa).

Aspartate 32 is an active-site residue. Mg(2+) is bound at residue aspartate 32. Residues 33-36, tryptophan 37, arginine 45, histidine 49, and 77-79 each bind substrate; these read GNGR and STE. Asparagine 80 (proton acceptor) is an active-site residue. Residues tryptophan 81, arginine 83, arginine 200, and 206-208 contribute to the substrate site; that span reads RLS. Residue glutamate 219 coordinates Mg(2+).

Belongs to the UPP synthase family. Homodimer. It depends on Mg(2+) as a cofactor.

Catalyzes the condensation of isopentenyl diphosphate (IPP) with allylic pyrophosphates generating different type of terpenoids. The sequence is that of Isoprenyl transferase from Clostridium perfringens (strain 13 / Type A).